The following is a 436-amino-acid chain: MAVTVETLEKLERKMTLTLPVGIVESEVQSRLKKLARTIKMDGFRPGKVPMNVVSQRYGYSVHYEVMNDKVGEAFFNAANEAKLRVAGQPRISESEASPEGEMAFDAVFEVYPDVKIGDLSTAEVEKISAEVTDSAIDKTVDILRKQRRTFSQRPHDAAAQDGDRVTVDFEGKIDGEVFAGGKAEDFQFIVGDGQMLKEFEEATRGMKSGESKTFQMAFPADYHGKDVAGKTADFMVTLKKIEAAHLPDVDGALAKSLGIEDATVEGLRADIKKNLAREVKARLLARNKQAVMDALVGKAELDLPNASVQAEVNRLMEGARADLKQRGIKDADKAPMPEDIFRPQAERRVRLGLVVAELVRSNNLQATPEQVKAHIEELAASYEKPADVMRWYYSDNNRLAEVEAIVIENNVTNFVLAQAKVSDKALSFDELMAQN.

One can recognise a PPIase FKBP-type domain in the interval 163-248 (GDRVTVDFEG…LKKIEAAHLP (86 aa)).

Belongs to the FKBP-type PPIase family. Tig subfamily.

The protein localises to the cytoplasm. It carries out the reaction [protein]-peptidylproline (omega=180) = [protein]-peptidylproline (omega=0). Involved in protein export. Acts as a chaperone by maintaining the newly synthesized protein in an open conformation. Functions as a peptidyl-prolyl cis-trans isomerase. This chain is Trigger factor, found in Albidiferax ferrireducens (strain ATCC BAA-621 / DSM 15236 / T118) (Rhodoferax ferrireducens).